The primary structure comprises 168 residues: Large ribosomal subunit protein bL17 (168 aa).

Basic and acidic residues predominate over residues 121–146 (AEAEGGEEKAEQKTEKKAAKAKEPKA). Residues 121–168 (AEAEGGEEKAEQKTEKKAAKAKEPKAAKAPKKAAAKPKAKAEKKGAEE) form a disordered region. Over residues 148 to 158 (KAPKKAAAKPK) the composition is skewed to basic residues. The span at 159 to 168 (AKAEKKGAEE) shows a compositional bias: basic and acidic residues.

It belongs to the bacterial ribosomal protein bL17 family. As to quaternary structure, part of the 50S ribosomal subunit. Contacts protein L32.

In Anaeromyxobacter sp. (strain Fw109-5), this protein is Large ribosomal subunit protein bL17.